The chain runs to 513 residues: Glycine/sarcosine/betaine reductase complex component C subunit beta (513 aa).

Heterooctamer of four alpha and four beta subunits. Component of the glycine, sarcosine and betaine reductase complexes, together with proteins A and B.

It catalyses the reaction acetyl phosphate + [thioredoxin]-disulfide + NH4(+) + H2O = [thioredoxin]-dithiol + glycine + phosphate + H(+). The catalysed reaction is acetyl phosphate + methylamine + [thioredoxin]-disulfide + H2O = sarcosine + [thioredoxin]-dithiol + phosphate + H(+). It carries out the reaction acetyl phosphate + trimethylamine + [thioredoxin]-disulfide + H2O = glycine betaine + [thioredoxin]-dithiol + phosphate + H(+). Its function is as follows. In the first step of glycine, betaine and sarcosine reductases, the substrate is bound to component PB via a Schiff base intermediate. Then the PB-activated substrate is nucleophilically attacked by the selenol anion of component PA to transform it to a carboxymethylated selenoether and the respective amine. By action of component PC, acetyl phosphate is formed, leaving component PA in its oxidized state. Finally component PA becomes reduced by the thioredoxin system to start a new catalytic cycle of reductive deamination. This chain is Glycine/sarcosine/betaine reductase complex component C subunit beta (grdC), found in Peptoclostridium acidaminophilum (Eubacterium acidaminophilum).